A 474-amino-acid chain; its full sequence is tRNA-2-methylthio-N(6)-dimethylallyladenosine synthase (474 aa).

The region spanning 3 to 120 (KKLLIKTWGC…LPEMIKQSQS (118 aa)) is the MTTase N-terminal domain. Residues C12, C49, C83, C157, C161, and C164 each contribute to the [4Fe-4S] cluster site. One can recognise a Radical SAM core domain in the interval 143 to 375 (RAEGATAFVS…QQQINAQAMR (233 aa)). Residues 378-441 (RLMLGTEQRV…ANSLRGEIVR (64 aa)) enclose the TRAM domain.

Belongs to the methylthiotransferase family. MiaB subfamily. As to quaternary structure, monomer. [4Fe-4S] cluster serves as cofactor.

It localises to the cytoplasm. The enzyme catalyses N(6)-dimethylallyladenosine(37) in tRNA + (sulfur carrier)-SH + AH2 + 2 S-adenosyl-L-methionine = 2-methylsulfanyl-N(6)-dimethylallyladenosine(37) in tRNA + (sulfur carrier)-H + 5'-deoxyadenosine + L-methionine + A + S-adenosyl-L-homocysteine + 2 H(+). Catalyzes the methylthiolation of N6-(dimethylallyl)adenosine (i(6)A), leading to the formation of 2-methylthio-N6-(dimethylallyl)adenosine (ms(2)i(6)A) at position 37 in tRNAs that read codons beginning with uridine. The protein is tRNA-2-methylthio-N(6)-dimethylallyladenosine synthase of Vibrio vulnificus (strain CMCP6).